Reading from the N-terminus, the 149-residue chain is Ribonuclease pancreatic (149 aa).

A signal peptide spans 1 to 25 (MGLENSLILFSLLVLVLGWVQPSLG). A disordered region spans residues 25 to 62 (GKESSPDKFKRQHMDTEGSSKSSPTYCNQMRSPQEMTK). Residues 28–42 (SSPDKFKRQHMDTEG) show a composition bias toward basic and acidic residues. Residues K32 and R35 each coordinate substrate. H37 (proton acceptor) is an active-site residue. Over residues 43-61 (SSKSSPTYCNQMRSPQEMT) the composition is skewed to polar residues. Disulfide bonds link C51/C109, C65/C120, C83/C135, and C90/C97. Residues 66–70 (KPVNT) and K91 each bind substrate. H144 serves as the catalytic Proton donor.

The protein belongs to the pancreatic ribonuclease family. As to quaternary structure, monomer. Interacts with and forms tight 1:1 complexes with RNH1. Dimerization of two such complexes may occur. Interaction with RNH1 inhibits this protein.

The protein localises to the secreted. It catalyses the reaction an [RNA] containing cytidine + H2O = an [RNA]-3'-cytidine-3'-phosphate + a 5'-hydroxy-ribonucleotide-3'-[RNA].. The enzyme catalyses an [RNA] containing uridine + H2O = an [RNA]-3'-uridine-3'-phosphate + a 5'-hydroxy-ribonucleotide-3'-[RNA].. Its function is as follows. Endonuclease that catalyzes the cleavage of RNA on the 3' side of pyrimidine nucleotides. Acts on single-stranded and double-stranded RNA. The sequence is that of Ribonuclease pancreatic (RNASE1) from Sundamys muelleri (Mueller's giant sunda rat).